The following is a 232-amino-acid chain: Ribonuclease 3 (232 aa).

Residues 7-135 (IQAVESKLKF…ILGAVYLDGG (129 aa)) enclose the RNase III domain. Glu48 contributes to the Mg(2+) binding site. The active site involves Asp52. Mg(2+) is bound by residues Asn121 and Glu124. Residue Glu124 is part of the active site. Residues 160-229 (NPKNRLQQFT…AKQALSTHDD (70 aa)) form the DRBM domain.

This sequence belongs to the ribonuclease III family. As to quaternary structure, homodimer. It depends on Mg(2+) as a cofactor.

It is found in the cytoplasm. It catalyses the reaction Endonucleolytic cleavage to 5'-phosphomonoester.. Functionally, digests double-stranded RNA. Involved in the processing of primary rRNA transcript to yield the immediate precursors to the large and small rRNAs (23S and 16S). Processes some mRNAs, and tRNAs when they are encoded in the rRNA operon. Processes pre-crRNA and tracrRNA of type II CRISPR loci if present in the organism. This chain is Ribonuclease 3, found in Chlamydia muridarum (strain MoPn / Nigg).